Reading from the N-terminus, the 60-residue chain is Large ribosomal subunit protein uL30 (60 aa).

The protein belongs to the universal ribosomal protein uL30 family. Part of the 50S ribosomal subunit.

This chain is Large ribosomal subunit protein uL30, found in Dehalococcoides mccartyi (strain CBDB1).